A 250-amino-acid chain; its full sequence is Functional amyloid subunit FapC (250 aa).

Positions 1 to 24 (MKPTMALKPLVFALAALMAVAAQA) are cleaved as a signal peptide. The FapC_R1 repeat unit spans residues 62-95 (NNAGANGSLSNSKGNLGANIAAGSGNQQDNAAAI). The interval 96-126 (TSSAGDAATVFAVADIYQESKDNKFTNKGTQ) is linker 1. One copy of the FapC_R2 repeat lies at 127–160 (NNALLNNSANNSSGNVGVNVAAGQGNQQKNNLAI). A linker 2 region spans residues 161 to 199 (VTADGKNVAAASNTEQVSLDNHFLNEASSKHSYKPQYVV). Residues 200 to 233 (NNAGLLNSANNASGNIGVNVAAGAGNQQSNTLTL) form a FapC_R3 repeat. The Cys-X-X-Cys motif lies at 237–240 (CTVC).

Belongs to the FapB/FapC family. As to quaternary structure, the major component of purified amyloid fibrils. Forms fibrils in vitro; in the presence of FapA the fibrils are about 50% wider. Interacts with FapA. Fibrillates in vitro; this is inhibited by FapA. Fibrils are resistant to boiling in 2% (weight/vol) SDS and require &gt;90% (vol/vol) formic acid to dissolve.

It localises to the fimbrium. It is found in the secreted. Functionally, the major functional amyloid subunit in this bacterium. Intrinsically disordered in its monomeric state. Upon overexpression of the endogenous six-gene locus (fapA-fapF) in situ, cells form large clumps during liquid growth, make large amounts of biofilm and produce amyloid fibrils. Expression of the 6 gene operon in E.coli strain BL21(DE3) induces flocculation and biofilm formation with copious extracellular fibrils. This chain is Functional amyloid subunit FapC, found in Pseudomonas fluorescens.